Reading from the N-terminus, the 186-residue chain is dCTP deaminase (186 aa).

Residue 107-112 (KSTYAR) participates in dCTP binding. Glutamate 133 serves as the catalytic Proton donor/acceptor. DCTP contacts are provided by glutamine 152, tyrosine 166, and glutamine 176.

The protein belongs to the dCTP deaminase family. As to quaternary structure, homotrimer.

The catalysed reaction is dCTP + H2O + H(+) = dUTP + NH4(+). Its pathway is pyrimidine metabolism; dUMP biosynthesis; dUMP from dCTP (dUTP route): step 1/2. In terms of biological role, catalyzes the deamination of dCTP to dUTP. This chain is dCTP deaminase, found in Campylobacter jejuni subsp. doylei (strain ATCC BAA-1458 / RM4099 / 269.97).